The sequence spans 125 residues: MSFSGKYQQVSQENFEPFMKAIGLPDEVIQQVKELKSTSEIEQNGNDFKITITTGPKVTVNKFTIGKETEMDTITGEKIKTVFHLDGNKLKVSLKGIESVTELADPNTITMTLGDVVYKTTSKRM.

The protein belongs to the calycin superfamily. Fatty-acid binding protein (FABP) family.

The protein localises to the cytoplasm. The chain is Fatty acid-binding protein, liver-type (fabp1) from Takifugu rubripes (Japanese pufferfish).